Here is a 323-residue protein sequence, read N- to C-terminus: Small ribosomal subunit protein uS3 (323 aa).

Residues Ile-17–Asp-86 enclose the KH type-2 domain. The segment at Ala-251 to Glu-303 is disordered. Positions Gly-270–Glu-303 are enriched in acidic residues.

It belongs to the universal ribosomal protein uS3 family. As to quaternary structure, part of the 30S ribosomal subunit.

In terms of biological role, binds the lower part of the 30S subunit head. The polypeptide is Small ribosomal subunit protein uS3 (Haloquadratum walsbyi (strain DSM 16790 / HBSQ001)).